The chain runs to 432 residues: Glutamate-1-semialdehyde 2,1-aminomutase 2 (432 aa).

An N6-(pyridoxal phosphate)lysine modification is found at Lys268.

The protein belongs to the class-III pyridoxal-phosphate-dependent aminotransferase family. HemL subfamily. As to quaternary structure, homodimer. It depends on pyridoxal 5'-phosphate as a cofactor.

The protein localises to the cytoplasm. It catalyses the reaction (S)-4-amino-5-oxopentanoate = 5-aminolevulinate. It participates in porphyrin-containing compound metabolism; protoporphyrin-IX biosynthesis; 5-aminolevulinate from L-glutamyl-tRNA(Glu): step 2/2. The polypeptide is Glutamate-1-semialdehyde 2,1-aminomutase 2 (Listeria monocytogenes serotype 4b (strain CLIP80459)).